The chain runs to 397 residues: MTSVAELREQVRSLQDELAQLKGERGKTTTREKITKMSSEVVDSNPYSRLMALQRMGIVKEYEQIRQKSVAVVGVGGVGSVTADMLTRCGVGKLILFDYDKVELANMNRLFFTPDQAGLSKVEAAAKTLNYINPDVKIFTNNYNITTVESFEKFMNAIRTGGIDGSGAVDLVLSCVDNFEARMAINAACNELSLNWFESGVSENAVSGHIQFIQPGEKACFACAPPLVVAENIDEKTLKREGVCAASLPTTMGIVAGMLVQNTLKYLLKFGTVSDYLGYNALIDFFPKMGLKPNPTCDDRFCVLRQQEFAAKPKEETFEEVQQEEESPVHAENLYGIELVSETEVESAPTVPVATANTGLKLAFETPIQMEHSSAATDVIKNDDVSLDDLMAQMKAI.

ATP contacts are provided by glycine 77, aspartate 98, lysine 121, asparagine 144, and asparagine 178. The Zn(2+) site is built by cysteine 220 and cysteine 223. The Glycyl thioester intermediate role is filled by cysteine 244. Zn(2+) contacts are provided by cysteine 297 and cysteine 302.

The protein belongs to the ubiquitin-activating E1 family. UBA5 subfamily.

Functionally, E1-like enzyme which activates UFM1. This is Ubiquitin-like modifier-activating enzyme 5 from Culex quinquefasciatus (Southern house mosquito).